Here is a 241-residue protein sequence, read N- to C-terminus: Ribosomal RNA small subunit methyltransferase G (241 aa).

Residues glycine 79, phenylalanine 84, 130 to 131 (AE), and arginine 150 each bind S-adenosyl-L-methionine.

Belongs to the methyltransferase superfamily. RNA methyltransferase RsmG family.

The protein resides in the cytoplasm. Functionally, specifically methylates the N7 position of a guanine in 16S rRNA. The chain is Ribosomal RNA small subunit methyltransferase G from Limosilactobacillus reuteri (strain DSM 20016) (Lactobacillus reuteri).